A 504-amino-acid chain; its full sequence is ATP synthase subunit alpha (504 aa).

Position 172–179 (172–179 (GDRQTGKT)) interacts with ATP.

This sequence belongs to the ATPase alpha/beta chains family. In terms of assembly, F-type ATPases have 2 components, CF(1) - the catalytic core - and CF(0) - the membrane proton channel. CF(1) has five subunits: alpha(3), beta(3), gamma(1), delta(1), epsilon(1). CF(0) has three main subunits: a(1), b(2) and c(9-12). The alpha and beta chains form an alternating ring which encloses part of the gamma chain. CF(1) is attached to CF(0) by a central stalk formed by the gamma and epsilon chains, while a peripheral stalk is formed by the delta and b chains.

It localises to the cell inner membrane. The enzyme catalyses ATP + H2O + 4 H(+)(in) = ADP + phosphate + 5 H(+)(out). Functionally, produces ATP from ADP in the presence of a proton gradient across the membrane. The alpha chain is a regulatory subunit. This chain is ATP synthase subunit alpha, found in Petrotoga mobilis (strain DSM 10674 / SJ95).